A 530-amino-acid polypeptide reads, in one-letter code: Estrogen receptor beta (530 aa).

Residues 1 to 148 (MEIKNSPSSL…SPSAKRDAHF (148 aa)) form a modulating region. S61 bears the Phosphoserine; alternate mark. S61 carries O-linked (GlcNAc) serine; alternate glycosylation. Residues S87 and S105 each carry the phosphoserine; by MAPK modification. 2 consecutive NR C4-type zinc fingers follow at residues 149–169 (CAVC…CEGC) and 185–209 (CPAT…LRKC). A DNA-binding region (nuclear receptor) is located at residues 149–214 (CAVCSDYASG…RLRKCYEVGM (66 aa)). The NR LBD domain maps to 264 to 498 (SPEQLVLTLL…DLLLEMLNAH (235 aa)). Over residues 506 to 515 (SISGSECCST) the composition is skewed to polar residues. The interval 506 to 530 (SISGSECCSTEDSKSKEGSQNLQSQ) is disordered.

The protein belongs to the nuclear hormone receptor family. NR3 subfamily. As to quaternary structure, binds DNA as a homodimer. Can form a heterodimer with ESR1. Interacts with NCOA1, NCOA3, NCOA5 and NCOA6 coactivators, leading to a strong increase of transcription of target genes. Interacts with UBE1C and AKAP13. Interacts with DNTTIP2. Interacts with CCDC62 in the presence of estradiol/E2; this interaction seems to enhance the transcription of target genes. Interacts with DNAAF4. Interacts with PRMT2. Interacts with CCAR2 (via N-terminus) in a ligand-independent manner. Interacts with RBM39, in the presence of estradiol (E2). Interacts with STUB1/CHIP. Phosphorylation at Ser-87 and Ser-105 recruits NCOA1. As to expression, expressed in prostate, ovary, Leydig cells and in epithelium of the efferent ductules and of the initial segment of the epididymis.

It is found in the nucleus. Nuclear hormone receptor. Binds estrogens with an affinity similar to that of ESR1/ER-alpha, and activates expression of reporter genes containing estrogen response elements (ERE) in an estrogen-dependent manner. This chain is Estrogen receptor beta (Esr2), found in Mus musculus (Mouse).